A 102-amino-acid polypeptide reads, in one-letter code: UPF0751 protein Dhaf_1351 (102 aa).

It belongs to the UPF0751 family.

In Desulfitobacterium hafniense (strain DSM 10664 / DCB-2), this protein is UPF0751 protein Dhaf_1351.